We begin with the raw amino-acid sequence, 90 residues long: Small ribosomal subunit protein bS16 (90 aa).

This sequence belongs to the bacterial ribosomal protein bS16 family.

This Geobacillus sp. (strain WCH70) protein is Small ribosomal subunit protein bS16.